Consider the following 417-residue polypeptide: Serine--tRNA ligase (417 aa).

232 to 234 (TAE) serves as a coordination point for L-serine. Residue 263–265 (RKE) coordinates ATP. Glutamate 286 provides a ligand contact to L-serine. 350–353 (EISS) is a binding site for ATP. Position 385 (serine 385) interacts with L-serine.

This sequence belongs to the class-II aminoacyl-tRNA synthetase family. Type-1 seryl-tRNA synthetase subfamily. Homodimer. The tRNA molecule binds across the dimer.

The protein localises to the cytoplasm. It catalyses the reaction tRNA(Ser) + L-serine + ATP = L-seryl-tRNA(Ser) + AMP + diphosphate + H(+). The enzyme catalyses tRNA(Sec) + L-serine + ATP = L-seryl-tRNA(Sec) + AMP + diphosphate + H(+). It functions in the pathway aminoacyl-tRNA biosynthesis; selenocysteinyl-tRNA(Sec) biosynthesis; L-seryl-tRNA(Sec) from L-serine and tRNA(Sec): step 1/1. Its function is as follows. Catalyzes the attachment of serine to tRNA(Ser). Is also able to aminoacylate tRNA(Sec) with serine, to form the misacylated tRNA L-seryl-tRNA(Sec), which will be further converted into selenocysteinyl-tRNA(Sec). The polypeptide is Serine--tRNA ligase (Sulfurihydrogenibium sp. (strain YO3AOP1)).